Here is a 448-residue protein sequence, read N- to C-terminus: UDP-N-acetylmuramoylalanine--D-glutamate ligase (448 aa).

ATP is bound at residue 116-122 (GSNAKST).

It belongs to the MurCDEF family.

Its subcellular location is the cytoplasm. It carries out the reaction UDP-N-acetyl-alpha-D-muramoyl-L-alanine + D-glutamate + ATP = UDP-N-acetyl-alpha-D-muramoyl-L-alanyl-D-glutamate + ADP + phosphate + H(+). It functions in the pathway cell wall biogenesis; peptidoglycan biosynthesis. Cell wall formation. Catalyzes the addition of glutamate to the nucleotide precursor UDP-N-acetylmuramoyl-L-alanine (UMA). In Pseudomonas fluorescens (strain ATCC BAA-477 / NRRL B-23932 / Pf-5), this protein is UDP-N-acetylmuramoylalanine--D-glutamate ligase.